A 329-amino-acid chain; its full sequence is Ferredoxin--NADP reductase 2 (329 aa).

Residues threonine 18, glutamate 37, glutamine 45, tyrosine 50, valine 90, phenylalanine 124, aspartate 285, and serine 326 each contribute to the FAD site.

Belongs to the ferredoxin--NADP reductase type 2 family. As to quaternary structure, homodimer. Requires FAD as cofactor.

The catalysed reaction is 2 reduced [2Fe-2S]-[ferredoxin] + NADP(+) + H(+) = 2 oxidized [2Fe-2S]-[ferredoxin] + NADPH. This Bacillus cytotoxicus (strain DSM 22905 / CIP 110041 / 391-98 / NVH 391-98) protein is Ferredoxin--NADP reductase 2.